The chain runs to 397 residues: Acetate kinase (397 aa).

N8 is a Mg(2+) binding site. Residue K15 participates in ATP binding. Position 90 (R90) interacts with substrate. The Proton donor/acceptor role is filled by D147. Position 207–211 (207–211) interacts with ATP; that stretch reads HLGAG. Position 382 (E382) interacts with Mg(2+).

It belongs to the acetokinase family. Homodimer. The cofactor is Mg(2+). Mn(2+) serves as cofactor.

It localises to the cytoplasm. It catalyses the reaction acetate + ATP = acetyl phosphate + ADP. The protein operates within metabolic intermediate biosynthesis; acetyl-CoA biosynthesis; acetyl-CoA from acetate: step 1/2. Its function is as follows. Catalyzes the formation of acetyl phosphate from acetate and ATP. Can also catalyze the reverse reaction. This Lactiplantibacillus plantarum (strain ATCC BAA-793 / NCIMB 8826 / WCFS1) (Lactobacillus plantarum) protein is Acetate kinase.